The sequence spans 449 residues: Keratin, type I cytoskeletal 27 (449 aa).

The interval 1 to 73 (MSVRFSSASR…VNEHGLLSGN (73 aa)) is head. Positions 74-109 (EKVTMQNLNDRLASYLENVQALEEANADLEQKIKDW) are coil 1A. In terms of domain architecture, IF rod spans 74–389 (EKVTMQNLND…LLIGGDEGSC (316 aa)). The linker 1 stretch occupies residues 110 to 131 (YEKFGPGSCRGLDHDYSRYFPI). Residues 132 to 223 (IDDLRTQIIS…KNHEEEMQAL (92 aa)) are coil 1B. The linker 12 stretch occupies residues 224–246 (QCAAGGNVNVEMNAAPGVDLTVL). The segment at 247 to 385 (LNNMRAEYEA…ETYCLLIGGD (139 aa)) is coil 2. The interval 386–449 (EGSCVKSKGQ…NNKNEQRIPS (64 aa)) is tail. Residues 425–449 (LSSRVHTLEEKSTKVNNKNEQRIPS) are disordered. Residues 430–449 (HTLEEKSTKVNNKNEQRIPS) show a composition bias toward basic and acidic residues.

The protein belongs to the intermediate filament family. Heterotetramer of two type I and two type II keratins. Interacts with KRT6A to form filaments.

It localises to the cytoplasm. Its function is as follows. Essential for the proper assembly of type I and type II keratin protein complexes and formation of keratin intermediate filaments in the inner root sheath (irs). In Rattus norvegicus (Rat), this protein is Keratin, type I cytoskeletal 27.